The sequence spans 495 residues: Cytochrome P450 2E1 (495 aa).

Position 298-303 (298-303 (FAGTET)) interacts with substrate. Residue Cys-437 participates in heme binding.

The protein belongs to the cytochrome P450 family. As to quaternary structure, interacts with chaperones HSP70 and HSP90; this interaction is required for initial targeting to mitochondria. Heme is required as a cofactor.

It localises to the endoplasmic reticulum membrane. The protein localises to the microsome membrane. It is found in the mitochondrion inner membrane. It carries out the reaction an organic molecule + reduced [NADPH--hemoprotein reductase] + O2 = an alcohol + oxidized [NADPH--hemoprotein reductase] + H2O + H(+). The catalysed reaction is (5Z,8Z,11Z)-eicosatrienoate + reduced [NADPH--hemoprotein reductase] + O2 = 19-hydroxy-(5Z,8Z,11Z)-eicosatrienoate + oxidized [NADPH--hemoprotein reductase] + H2O + H(+). It catalyses the reaction (5Z,8Z,11Z,14Z,17Z)-eicosapentaenoate + reduced [NADPH--hemoprotein reductase] + O2 = 19-hydroxy-(5Z,8Z,11Z,14Z,17Z)-eicosapentaenoate + oxidized [NADPH--hemoprotein reductase] + H2O + H(+). The enzyme catalyses (4Z,7Z,10Z,13Z,16Z,19Z)-docosahexaenoate + reduced [NADPH--hemoprotein reductase] + O2 = 21-hydroxy-(4Z,7Z,10Z,13Z,16Z,19Z)-docosahexaenoate + oxidized [NADPH--hemoprotein reductase] + H2O + H(+). It carries out the reaction dodecanoate + reduced [NADPH--hemoprotein reductase] + O2 = 11-hydroxydodecanoate + oxidized [NADPH--hemoprotein reductase] + H2O + H(+). The catalysed reaction is tetradecanoate + reduced [NADPH--hemoprotein reductase] + O2 = 13-hydroxytetradecanoate + oxidized [NADPH--hemoprotein reductase] + H2O + H(+). It catalyses the reaction 4-nitrophenol + NADPH + O2 + H(+) = 4-nitrocatechol + NADP(+) + H2O. It functions in the pathway lipid metabolism; fatty acid metabolism. Its activity is regulated as follows. The omega-1 hydroxylase activity is stimulated by cytochrome b5. In terms of biological role, a cytochrome P450 monooxygenase involved in the metabolism of fatty acids. Mechanistically, uses molecular oxygen inserting one oxygen atom into a substrate, and reducing the second into a water molecule, with two electrons provided by NADPH via cytochrome P450 reductase (NADPH--hemoprotein reductase). Catalyzes the hydroxylation of carbon-hydrogen bonds. Hydroxylates fatty acids specifically at the omega-1 position displaying the highest catalytic activity for saturated fatty acids. May be involved in the oxidative metabolism of xenobiotics. The protein is Cytochrome P450 2E1 (CYP2E1) of Sus scrofa (Pig).